Consider the following 982-residue polypeptide: Glutamate [NMDA] receptor subunit 1 (982 aa).

A signal peptide spans 1–22 (MRVAFIYRWLLCGAAIVNVLVA). The Extracellular portion of the chain corresponds to 23–568 (QRHTASDNPS…TLVSFLQPFS (546 aa)). 7 N-linked (GlcNAc...) asparagine glycosylation sites follow: asparagine 253, asparagine 309, asparagine 340, asparagine 392, asparagine 449, asparagine 476, and asparagine 496. Glycine-binding positions include 525–527 (PLT) and arginine 532. A helical membrane pass occupies residues 569-589 (NTLWILVMVSVHVVALVLYLL). Over 590–646 (DRFSPFGRFKLSHSDSNEEKALNLSSAVWFAWGVLLNSGIGEGTPRSFSARVLGMVW) the chain is Cytoplasmic. The helical transmembrane segment at 647 to 667 (AGFAMIIVASYTANLAAFLVL) threads the bilayer. At 668-826 (ERPKTKLSGI…KTPNTLGLKN (159 aa)) the chain is on the extracellular side. Asparagine 688 carries N-linked (GlcNAc...) asparagine glycosylation. The glycine site is built by serine 698 and aspartate 742. The chain crosses the membrane as a helical span at residues 827–847 (MAGVFILVGVGIAGGVGLIII). Residues 848–982 (EVIYKKHQVK…YTSDVSHLVV (135 aa)) lie on the Cytoplasmic side of the membrane. The tract at residues 948-982 (LTASQLGLGKTRPQQNPLPPRYSPGYTSDVSHLVV) is disordered. Over residues 972-982 (GYTSDVSHLVV) the composition is skewed to polar residues.

It belongs to the glutamate-gated ion channel (TC 1.A.10.1) family. As to quaternary structure, forms a heteromeric NMDA channel with Nmdar2.

Its subcellular location is the cell membrane. The protein resides in the postsynaptic cell membrane. It localises to the postsynaptic density. Functionally, NMDA receptor subtype of glutamate-gated ion channels with high calcium permeability and voltage-dependent sensitivity to magnesium. Mediated by glycine. This protein plays a key role in synaptic plasticity, synaptogenesis, excitotoxicity, memory acquisition and learning. It mediates neuronal functions in glutamate neurotransmission. Is involved in the cell surface targeting of NMDA receptors. Plays a role in associative learning and in long-term memory consolidation. This Drosophila grimshawi (Hawaiian fruit fly) protein is Glutamate [NMDA] receptor subunit 1.